A 53-amino-acid chain; its full sequence is MKVDQMFDLDLRKSYEASELSPQASIIKTTIKVSKAVCKTLTCICTGSCSNCK.

A propeptide spanning residues 1 to 24 is cleaved from the precursor; it reads MKVDQMFDLDLRKSYEASELSPQA. Residue alanine 24 is modified to N-acetylalanine. Serine 25 is modified (2,3-didehydroalanine (Ser)). 2,3-didehydrobutyrine occurs at positions 29 and 30. Positions 34–38 form a cross-link, lanthionine (Ser-Cys); sequence SKAVC. 3 cross-links (beta-methyllanthionine (Thr-Cys)) span residues 40–43, 42–45, and 46–49; these read TLTC, TCIC, and TGSC. Positions 48 to 52 form a cross-link, lanthionine (Ser-Cys); the sequence is SCSNC. The residue at position 50 (serine 50) is a 2,3-didehydroalanine (Ser).

In terms of processing, maturation of lantibiotics involves the enzymatic conversion of Thr, and Ser into dehydrated AA and the formation of thioether bonds with cysteine. This is followed by membrane translocation and cleavage of the modified precursor. Post-translationally, the structure of the 2,3-didehydrobutyrines is not discussed in PubMed:17071789.

The protein localises to the secreted. Lanthionine-containing peptide antibiotic (lantibiotic) active on Gram-positive bacteria. The bactericidal activity of lantibiotics is based on depolarization of energized bacterial cytoplasmic membranes, initiated by the formation of aqueous transmembrane pores. Lacks antibacterial activity against Gram-negative bacteria. This chain is Lantibiotic paenibacillin, found in Paenibacillus polymyxa (Bacillus polymyxa).